Here is a 596-residue protein sequence, read N- to C-terminus: tRNA(Met) cytidine acetyltransferase TmcA (596 aa).

Residues Q138, 160–169, and R285 each bind ATP; that span reads GRGKSTLAGK. One can recognise an N-acetyltransferase domain in the interval 328 to 481; it reads SDLRRLFDAQ…SGYHSAMMLY (154 aa). Residues 406–408 and 413–419 each bind acetyl-CoA; these read IAV and QKQGIGK.

The protein belongs to the RNA cytidine acetyltransferase family. TmcA subfamily.

It is found in the cytoplasm. It catalyses the reaction cytidine(34) in elongator tRNA(Met) + acetyl-CoA + ATP + H2O = N(4)-acetylcytidine(34) in elongator tRNA(Met) + ADP + phosphate + CoA + H(+). Functionally, catalyzes the formation of N(4)-acetylcytidine (ac(4)C) at the wobble position of tRNA(Met), by using acetyl-CoA as an acetyl donor and ATP (or GTP). This Actinobacillus pleuropneumoniae serotype 5b (strain L20) protein is tRNA(Met) cytidine acetyltransferase TmcA.